A 436-amino-acid polypeptide reads, in one-letter code: GTPase Der (436 aa).

EngA-type G domains are found at residues 4–167 and 175–351; these read PTIA…PNTS and IKFS…MNQN. GTP-binding positions include 10–17, 57–61, 119–122, 181–188, 229–233, and 294–297; these read GRPNVGKS, DTGGI, NKVD, DTAGM, and NKWD. The region spanning 352–436 is the KH-like domain; that stretch reads LRIPSALLND…PIKIIPRRRK (85 aa).

The protein belongs to the TRAFAC class TrmE-Era-EngA-EngB-Septin-like GTPase superfamily. EngA (Der) GTPase family. In terms of assembly, associates with the 50S ribosomal subunit.

Its function is as follows. GTPase that plays an essential role in the late steps of ribosome biogenesis. This chain is GTPase Der, found in Enterococcus faecalis (strain ATCC 700802 / V583).